The primary structure comprises 75 residues: Dermaseptin-SP5 (75 aa).

An N-terminal signal peptide occupies residues 1–22 (MAFLKKSLFLVLFLGLVSLSMC). A propeptide spanning residues 23-45 (EEEKRENEVEEEQEDDEQSELRR) is cleaved from the precursor. The interval 26–46 (KRENEVEEEQEDDEQSELRRS) is disordered. Acidic residues predominate over residues 30–40 (EVEEEQEDDEQ). Residue Pro-72 is modified to Proline amide. Positions 74–75 (EQ) are excised as a propeptide.

The protein belongs to the frog skin active peptide (FSAP) family. Dermaseptin subfamily. Expressed by the skin glands.

It localises to the secreted. It is found in the target cell membrane. In terms of biological role, antimicrobial peptide with weak activity against Gram-positive and Gram-negative bacteria and fungi. Has been tested against E.coli (MIC=96.06-256 uM), S.aureus (MIC&gt;192.12 uM), K.pneumoniae (MIC&gt;189.00 uM) and C.albicans (MIC=384.24-1024 uM). Probably acts by disturbing membrane functions with its alpha-helical amphipathic structure. May penetrate bacterial membranes, but stay at the mammalian membrane surface. Does not show hemolytic activity. Does not interact at all with cardiolipin. The protein is Dermaseptin-SP5 of Agalychnis spurrelli (Gliding leaf frog).